A 406-amino-acid polypeptide reads, in one-letter code: MATPGNLGSSVLASKTKTKKKHFVAQKVKLFRASDPLLSVLMWGVNHSINELSHVQIPVMLMPDDFKAYSKIKVDNHLFNKENMPSHFKFKEYCPMVFRNLRERFGIDDQDFQNSLTRSAPLPNDSQARSGARFHTSYDKRYIIKTITSEDVAEMHNILKKYHQYIVECHGITLLPQFLGMYRLNVDGVEIYVIVTRNVFSHRLSVYRKYDLKGSTVAREASDKEKAKELPTLKDNDFINEGQKIYIDDNNKKVFLEKLKKDVEFLAQLKLMDYSLLVGIHDVERAEQEEVECEENDGEEEGESDGTHPVGTPPDSPGNTLNSSPPLAPGEFDPNIDVYGIKCHENSPRKEVYFMAIIDILTHYDAKKKAAHAAKTVKHGAGAEISTVNPEQYSKRFLDFIGHILT.

Ala-2 carries the N-acetylalanine modification. Residue Thr-3 is modified to Phosphothreonine. Position 14 is a phosphoserine (Ser-14). Positions 33–405 (ASDPLLSVLM…RFLDFIGHIL (373 aa)) constitute a PIPK domain. Residues 59-65 (VMLMPDD) form a required for interaction with PIP5K1A region. Residues Lys-89 and Lys-145 each carry the N6-acetyllysine modification. The segment at 288 to 329 (QEEVECEENDGEEEGESDGTHPVGTPPDSPGNTLNSSPPLAP) is disordered. The span at 289–304 (EEVECEENDGEEEGES) shows a compositional bias: acidic residues.

As to quaternary structure, homodimer. Interacts with PIP4K2B; the interaction may regulate localization to the nucleus. Probably interacts with PIP5K1A; the interaction inhibits PIP5K1A kinase activity. Post-translationally, phosphorylated in tyrosines. Phosphorylation is induced by light and increases kinase activity. In terms of tissue distribution, expressed ubiquitously, with high levels in the brain. Present in most tissues, except notably skeletal muscle and small intestine.

It localises to the cell membrane. Its subcellular location is the nucleus. The protein localises to the lysosome. It is found in the cytoplasm. The protein resides in the photoreceptor inner segment. It localises to the cell projection. Its subcellular location is the cilium. The protein localises to the photoreceptor outer segment. The catalysed reaction is a 1,2-diacyl-sn-glycero-3-phospho-(1D-myo-inositol-5-phosphate) + ATP = a 1,2-diacyl-sn-glycero-3-phospho-(1D-myo-inositol-4,5-bisphosphate) + ADP + H(+). It carries out the reaction 1,2-dihexadecanoyl-sn-glycero-3-phospho-(1D-myo-inositol-5-phosphate) + ATP = 1,2-dihexadecanoyl-sn-glycero-3-phospho-(1D-myo-inositol-4,5-bisphosphate) + ADP + H(+). The enzyme catalyses 1,2-dihexadecanoyl-sn-glycero-3-phospho-(1D-myo-inositol-5-phosphate) + GTP = 1,2-dihexadecanoyl-sn-glycero-3-phospho-(1D-myo-inositol-4,5-bisphosphate) + GDP + H(+). With respect to regulation, in rod outer segments, activated by light. Inhibited by I-OMe tyrphostin AG-538 (I-OMe-AG-538), acting as an ATP-competitive inhibitor. Functionally, catalyzes the phosphorylation of phosphatidylinositol 5-phosphate (PtdIns5P) on the fourth hydroxyl of the myo-inositol ring, to form phosphatidylinositol 4,5-bisphosphate (PtdIns(4,5)P2). Has both ATP- and GTP-dependent kinase activities. May exert its function by regulating the levels of PtdIns5P, which functions in the cytosol by increasing AKT activity and in the nucleus signals through ING2. May regulate the pool of cytosolic PtdIns5P in response to the activation of tyrosine phosphorylation. Required for lysosome-peroxisome membrane contacts and intracellular cholesterol transport through modulating peroxisomal PtdIns(4,5)P2 level. In collaboration with PIP4K2B, has a role in mediating autophagy in times of nutrient stress. Required for autophagosome-lysosome fusion and the regulation of cellular lipid metabolism. May be involved in thrombopoiesis, and the terminal maturation of megakaryocytes and regulation of their size. Negatively regulates insulin signaling through a catalytic-independent mechanism. PIP4Ks interact with PIP5Ks and suppress PIP5K-mediated PtdIns(4,5)P2 synthesis and insulin-dependent conversion to PtdIns(3,4,5)P3. In Homo sapiens (Human), this protein is Phosphatidylinositol 5-phosphate 4-kinase type-2 alpha.